The following is a 143-amino-acid chain: Large ribosomal subunit protein uL15 (143 aa).

The disordered stretch occupies residues 1-52 (MELNSIQPADGAKHYKRRVGRGIGSGLGKTSGRGHKGQKSRSGGFHKVGFEG). Residues 21–31 (RGIGSGLGKTS) show a composition bias toward gly residues.

Belongs to the universal ribosomal protein uL15 family. In terms of assembly, part of the 50S ribosomal subunit.

In terms of biological role, binds to the 23S rRNA. The protein is Large ribosomal subunit protein uL15 of Janthinobacterium sp. (strain Marseille) (Minibacterium massiliensis).